A 108-amino-acid polypeptide reads, in one-letter code: Large ribosomal subunit protein uL23 (108 aa).

This sequence belongs to the universal ribosomal protein uL23 family. As to quaternary structure, part of the 50S ribosomal subunit. Contacts protein L29, and trigger factor when it is bound to the ribosome.

Functionally, one of the early assembly proteins it binds 23S rRNA. One of the proteins that surrounds the polypeptide exit tunnel on the outside of the ribosome. Forms the main docking site for trigger factor binding to the ribosome. The chain is Large ribosomal subunit protein uL23 from Albidiferax ferrireducens (strain ATCC BAA-621 / DSM 15236 / T118) (Rhodoferax ferrireducens).